A 226-amino-acid polypeptide reads, in one-letter code: 2-C-methyl-D-erythritol 4-phosphate cytidylyltransferase (226 aa).

Belongs to the IspD/TarI cytidylyltransferase family. IspD subfamily.

The enzyme catalyses 2-C-methyl-D-erythritol 4-phosphate + CTP + H(+) = 4-CDP-2-C-methyl-D-erythritol + diphosphate. The protein operates within isoprenoid biosynthesis; isopentenyl diphosphate biosynthesis via DXP pathway; isopentenyl diphosphate from 1-deoxy-D-xylulose 5-phosphate: step 2/6. In terms of biological role, catalyzes the formation of 4-diphosphocytidyl-2-C-methyl-D-erythritol from CTP and 2-C-methyl-D-erythritol 4-phosphate (MEP). The chain is 2-C-methyl-D-erythritol 4-phosphate cytidylyltransferase from Actinobacillus pleuropneumoniae serotype 7 (strain AP76).